Consider the following 335-residue polypeptide: RNA 3'-terminal phosphate cyclase (335 aa).

Residues glutamine 101 and 282–285 each bind ATP; that span reads HMGD. The active-site Tele-AMP-histidine intermediate is histidine 306.

It belongs to the RNA 3'-terminal cyclase family. Type 1 subfamily.

It is found in the cytoplasm. The catalysed reaction is a 3'-end 3'-phospho-ribonucleotide-RNA + ATP = a 3'-end 2',3'-cyclophospho-ribonucleotide-RNA + AMP + diphosphate. Catalyzes the conversion of 3'-phosphate to a 2',3'-cyclic phosphodiester at the end of RNA. The mechanism of action of the enzyme occurs in 3 steps: (A) adenylation of the enzyme by ATP; (B) transfer of adenylate to an RNA-N3'P to produce RNA-N3'PP5'A; (C) and attack of the adjacent 2'-hydroxyl on the 3'-phosphorus in the diester linkage to produce the cyclic end product. The biological role of this enzyme is unknown but it is likely to function in some aspects of cellular RNA processing. This is RNA 3'-terminal phosphate cyclase from Sulfolobus acidocaldarius (strain ATCC 33909 / DSM 639 / JCM 8929 / NBRC 15157 / NCIMB 11770).